Reading from the N-terminus, the 117-residue chain is Large ribosomal subunit protein bL20 (117 aa).

It belongs to the bacterial ribosomal protein bL20 family.

In terms of biological role, binds directly to 23S ribosomal RNA and is necessary for the in vitro assembly process of the 50S ribosomal subunit. It is not involved in the protein synthesizing functions of that subunit. The polypeptide is Large ribosomal subunit protein bL20 (Pasteurella multocida (strain Pm70)).